The chain runs to 303 residues: GTPase Era (303 aa).

The Era-type G domain maps to 9-176; it reads KSGFVSIIGR…VEQIVEHMEE (168 aa). The tract at residues 17–24 is G1; the sequence is GRPNVGKS. Residue 17–24 coordinates GTP; that stretch reads GRPNVGKS. The segment at 43–47 is G2; the sequence is QTTRN. A G3 region spans residues 64-67; that stretch reads DTPG. GTP-binding positions include 64-68 and 126-129; these read DTPGI and NKID. The segment at 126–129 is G4; it reads NKID. The tract at residues 155–157 is G5; the sequence is ISA. In terms of domain architecture, KH type-2 spans 199 to 284; that stretch reads IREKVLHLTK…YLELWVKVQK (86 aa).

It belongs to the TRAFAC class TrmE-Era-EngA-EngB-Septin-like GTPase superfamily. Era GTPase family. As to quaternary structure, monomer.

Its subcellular location is the cytoplasm. The protein resides in the cell membrane. Its function is as follows. An essential GTPase that binds both GDP and GTP, with rapid nucleotide exchange. Plays a role in 16S rRNA processing and 30S ribosomal subunit biogenesis and possibly also in cell cycle regulation and energy metabolism. The sequence is that of GTPase Era from Shouchella clausii (strain KSM-K16) (Alkalihalobacillus clausii).